The sequence spans 249 residues: Metal-staphylopine import system ATP-binding protein CntF (249 aa).

Positions 2–244 (IKVTDVEKSY…DNAYTRELIE (243 aa)) constitute an ABC transporter domain. 42–49 (GESGSGKS) serves as a coordination point for ATP.

Belongs to the ABC transporter superfamily. The complex is composed of two ATP-binding proteins (CntD and CntF), two transmembrane proteins (CntB and CntC) and a solute-binding protein (CntA).

It is found in the cell membrane. In terms of biological role, part of the ABC transporter complex CntABCDF (Opp1) involved in the uptake of metal in complex with the metallophore staphylopine (StP). May be involved in the import of a large array of divalent metals ions such as nickel, cobalt, zinc, copper and iron. Probably responsible for energy coupling to the transport system. The protein is Metal-staphylopine import system ATP-binding protein CntF of Staphylococcus aureus (strain Mu50 / ATCC 700699).